Consider the following 360-residue polypeptide: Peptide chain release factor 1 (360 aa).

Residue glutamine 237 is modified to N5-methylglutamine.

The protein belongs to the prokaryotic/mitochondrial release factor family. In terms of processing, methylated by PrmC. Methylation increases the termination efficiency of RF1.

It is found in the cytoplasm. Functionally, peptide chain release factor 1 directs the termination of translation in response to the peptide chain termination codons UAG and UAA. The chain is Peptide chain release factor 1 from Pseudomonas syringae pv. tomato (strain ATCC BAA-871 / DC3000).